Here is a 240-residue protein sequence, read N- to C-terminus: Probable xyloglucan-specific endo-beta-1,4-glucanase A (240 aa).

The N-terminal stretch at 1 to 15 (MKFLTPLVLSSLASA) is a signal peptide.

The protein belongs to the glycosyl hydrolase 12 (cellulase H) family.

Its subcellular location is the secreted. It catalyses the reaction xyloglucan + H2O = xyloglucan oligosaccharides.. Catalyzes endohydrolysis of 1,4-beta-D-glucosidic linkages in xyloglucan with retention of the beta-configuration of the glycosyl residues. Specific for xyloglucan and does not hydrolyze other cell wall components. This chain is Probable xyloglucan-specific endo-beta-1,4-glucanase A (xgeA), found in Aspergillus oryzae (strain ATCC 42149 / RIB 40) (Yellow koji mold).